Consider the following 463-residue polypeptide: Alpha-L-arabinofuranosidase B (463 aa).

Positions 1–26 are cleaved as a signal peptide; it reads MIPQLNRNYAWAIALGLVARSSLVSA. Residues 27 to 308 are catalytic; it reads GPCDIYASGG…ILGIGGHNSK (282 aa). A disulfide bridge connects residues Cys29 and Cys39. Asn81 carries N-linked (GlcNAc...) asparagine glycosylation. Cystine bridges form between Cys89-Cys94 and Cys184-Cys185. Asp227 is a binding site for substrate. Glu229 (nucleophile) is an active-site residue. Asn230 lines the substrate pocket. Asn280 carries N-linked (GlcNAc...) asparagine glycosylation. Gly304 provides a ligand contact to substrate. The ABD stretch occupies residues 309-463; the sequence is LTVGSSISLR…VSWVVSASFA (155 aa). N-linked (GlcNAc...) asparagine glycosylation is present at Asn332. Cys366 and Cys404 form a disulfide bridge. Residues His381, Asn383, Phe384, His428, Asp430, Leu433, and Asp453 each contribute to the substrate site.

Belongs to the glycosyl hydrolase 54 family. Post-translationally, residue Asn-280 is mannosylated with up to 7 mannose residues.

It is found in the secreted. The enzyme catalyses Hydrolysis of terminal non-reducing alpha-L-arabinofuranoside residues in alpha-L-arabinosides.. The protein operates within glycan metabolism; L-arabinan degradation. Its function is as follows. Secreted alpha-L-arabinofuranosidase that actively hydrolyzes p-NP-alpha-L-arabinofuranoside and is specific for furanose configuration of the carbohydrate ring. Also exhibits significant activity against polymeric arabinose-containing substrates such as arabinan and arabinoxylan, a major component of plant hemicellulose. This is Alpha-L-arabinofuranosidase B (abfB) from Penicillium canescens.